Consider the following 270-residue polypeptide: Diaminopimelate epimerase (270 aa).

Residues N15, Q49, and N66 each contribute to the substrate site. C75 acts as the Proton donor in catalysis. Substrate is bound by residues 76–77 (GN), N155, N187, and 204–205 (ER). The Proton acceptor role is filled by C213. 214–215 (GS) is a substrate binding site.

The protein belongs to the diaminopimelate epimerase family. Homodimer.

The protein localises to the cytoplasm. The enzyme catalyses (2S,6S)-2,6-diaminopimelate = meso-2,6-diaminopimelate. The protein operates within amino-acid biosynthesis; L-lysine biosynthesis via DAP pathway; DL-2,6-diaminopimelate from LL-2,6-diaminopimelate: step 1/1. Catalyzes the stereoinversion of LL-2,6-diaminopimelate (L,L-DAP) to meso-diaminopimelate (meso-DAP), a precursor of L-lysine and an essential component of the bacterial peptidoglycan. The polypeptide is Diaminopimelate epimerase (Rickettsia akari (strain Hartford)).